A 292-amino-acid polypeptide reads, in one-letter code: Ribosomal RNA small subunit methyltransferase A (292 aa).

N28, L30, G55, E76, D101, and N126 together coordinate S-adenosyl-L-methionine.

This sequence belongs to the class I-like SAM-binding methyltransferase superfamily. rRNA adenine N(6)-methyltransferase family. RsmA subfamily.

It is found in the cytoplasm. The catalysed reaction is adenosine(1518)/adenosine(1519) in 16S rRNA + 4 S-adenosyl-L-methionine = N(6)-dimethyladenosine(1518)/N(6)-dimethyladenosine(1519) in 16S rRNA + 4 S-adenosyl-L-homocysteine + 4 H(+). Functionally, specifically dimethylates two adjacent adenosines (A1518 and A1519) in the loop of a conserved hairpin near the 3'-end of 16S rRNA in the 30S particle. May play a critical role in biogenesis of 30S subunits. The chain is Ribosomal RNA small subunit methyltransferase A from Bacillus anthracis.